The sequence spans 217 residues: Small ribosomal subunit protein uS3 (217 aa).

The KH type-2 domain maps to 38–106 (IRKFIDNELK…KVHINVIEIK (69 aa)).

Belongs to the universal ribosomal protein uS3 family. In terms of assembly, part of the 30S ribosomal subunit. Forms a tight complex with proteins S10 and S14.

Binds the lower part of the 30S subunit head. Binds mRNA in the 70S ribosome, positioning it for translation. This Staphylococcus epidermidis (strain ATCC 35984 / DSM 28319 / BCRC 17069 / CCUG 31568 / BM 3577 / RP62A) protein is Small ribosomal subunit protein uS3.